The following is a 171-amino-acid chain: 3-hydroxydecanoyl-[acyl-carrier-protein] dehydratase (171 aa).

His-70 is a catalytic residue.

This sequence belongs to the thioester dehydratase family. FabA subfamily. As to quaternary structure, homodimer.

The protein localises to the cytoplasm. It carries out the reaction a (3R)-hydroxyacyl-[ACP] = a (2E)-enoyl-[ACP] + H2O. The catalysed reaction is (3R)-hydroxydecanoyl-[ACP] = (2E)-decenoyl-[ACP] + H2O. It catalyses the reaction (2E)-decenoyl-[ACP] = (3Z)-decenoyl-[ACP]. It functions in the pathway lipid metabolism; fatty acid biosynthesis. Its function is as follows. Necessary for the introduction of cis unsaturation into fatty acids. Catalyzes the dehydration of (3R)-3-hydroxydecanoyl-ACP to E-(2)-decenoyl-ACP and then its isomerization to Z-(3)-decenoyl-ACP. Can catalyze the dehydratase reaction for beta-hydroxyacyl-ACPs with saturated chain lengths up to 16:0, being most active on intermediate chain length. This is 3-hydroxydecanoyl-[acyl-carrier-protein] dehydratase from Histophilus somni (strain 129Pt) (Haemophilus somnus).